We begin with the raw amino-acid sequence, 1724 residues long: Protein CHROMATIN REMODELING 5 (1724 aa).

Disordered regions lie at residues 24–88 (QNAA…QSST) and 104–415 (DCQP…DDIE). Positions 25–34 (NAATFQSSPL) are enriched in polar residues. The segment covering 126 to 144 (EAYHSEDNHSNDRSEKLDS) has biased composition (basic and acidic residues). Residues 138 to 164 (RSEKLDSENENDNENEEEDNEMNKHQS) adopt a coiled-coil conformation. 4 stretches are compositionally biased toward acidic residues: residues 145-157 (ENEN…EEDN), 170-186 (PADE…DEDN), 239-264 (ADMD…DAAD), and 278-297 (VSDE…YEDD). Basic residues predominate over residues 301–313 (KKPKVRQQSKGFR). A Nuclear localization signal 1 motif is present at residues 320–327 (ERKSFHVS). The segment covering 337 to 350 (QDDDSEEDSENDND) has biased composition (acidic residues). Over residues 362-376 (TLRQNNGRSTNTIGQ) the composition is skewed to polar residues. The segment covering 403 to 412 (DGKNRKNQKD) has biased composition (basic and acidic residues). The region spanning 420 to 499 (DVIEKVLWHQ…FKKVLNYTKK (80 aa)) is the Chromo 1 domain. Residues 505 to 525 (RYRTALSREEIEVNDVSKEMD) adopt a coiled-coil conformation. Residues 533–597 (SQVERIIADR…REVSIAVQGK (65 aa)) enclose the Chromo 2 domain. One can recognise a Helicase ATP-binding domain in the interval 637–809 (VNSWLNDTNV…WALLHFLDPG (173 aa)). Residue 650–657 (DEMGLGKT) coordinates ATP. The DEAH box signature appears at 760 to 763 (DEAH). Positions 943 to 1094 (ILDKLLVRLR…HLVIQKLNAE (152 aa)) constitute a Helicase C-terminal domain. The stretch at 1126–1163 (KEDKNDEESKKRLLSMDIDEILERAEQVEEKHTDETEH) forms a coiled coil. A disordered region spans residues 1199 to 1245 (ALAPRAARNTKSYVDPSHPDRTSKRKKKGSEPPEHTERSQKRRKTEY). 2 consecutive short sequence motifs (nuclear localization signal) follow at residues 1224 to 1231 (KKKGSEPP) and 1348 to 1355 (LKRVQGLQ). The segment covering 1227 to 1237 (GSEPPEHTERS) has biased composition (basic and acidic residues). Disordered stretches follow at residues 1480–1524 (QFKA…EMSD) and 1654–1724 (KFKT…FPPR). Positions 1504 to 1520 (DGPRKTQKAEPLVKEEG) are enriched in basic and acidic residues. Residues 1658-1667 (AGNSQGSQQV) show a composition bias toward polar residues. Basic and acidic residues predominate over residues 1669–1691 (KGIDTAKFEAWKRRRRTENDVQT). Positions 1692 to 1702 (ERPTITNSNSL) are enriched in polar residues.

Belongs to the SNF2/RAD54 helicase family.

The protein localises to the nucleus. DNA-binding helicase that specifically binds to the promoter of target genes, leading to chromatin remodeling, possibly by promoting deposition of histone H3.3. Probable chromatin remodeling factor. This Arabidopsis thaliana (Mouse-ear cress) protein is Protein CHROMATIN REMODELING 5.